The primary structure comprises 636 residues: MNPSAPSYPMASLYVGDLHPDVTEAMLYEKFSPAGPILSIRVCRDMITRRSLGYAYVNFQQPADAERALDTMNFDVIKGKPVRIMWSQRDPSLRKSGVGNIFIKNLDKSIDNKALYDTFSAFGNILSCKVVCDENGSKGYGFVHFETQEAAERAIEKMNGMLLNDRKVFVGRFKSRKEREAELGARAKEFTNVYIKNFGEDMDDERLKELFGKFGPALSVKVMTDESGKSKGFGFVSFERHEDAQKAVDEMNGKELNGKQIYVGRAQKKVERQTELKRKFEQMKQDRITRYQGVNLYVKNLDDGIDDERLRKEFSPFGTITSAKVMMEGGRSKGFGFVCFSSPEEATKAVTEMNGRIVATKPLYVALAQRKEERQAHLTNQYMQRMASVRAVPNPVINPYQPAPPSGYFMAAIPQTQNRAAYYPPSQIAQLRPSPRWTAQGARPHPFQNMPGAIRPAAPRPPFSTMRPASSQVPRVMSTQRVANTSTQTMGPRPAAAATAATPAVRTVPQYKYAAGVRNPQQHLNAQPQVTMQQPAVHVQGQEPLTASMLASAPPQEQKQMLGERLFPLIQAMHPSLAGKITGMLLEIDNSELLHMLESPESLRSKVDEAVAVLQAHQAKEAAQKAVNSATGVPTV.

Residue Met-1 is modified to N-acetylmethionine. 4 RRM domains span residues 11–89, 99–175, 191–268, and 294–370; these read ASLY…WSQR, GNIF…RFKS, TNVY…RAQK, and VNLY…LAQR. The tract at residues 166–289 is UNR-binding; it reads RKVFVGRFKS…FEQMKQDRIT (124 aa). Lys-299 carries the post-translational modification N6-methyllysine. Ser-315 carries the post-translational modification Phosphoserine. Thr-319 is modified (phosphothreonine). Residues Arg-385, Arg-419, Arg-432, and Arg-436 each carry the omega-N-methylarginine modification. 2 positions are modified to omega-N-methylated arginine; by CARM1: Arg-455 and Arg-460. Omega-N-methylarginine occurs at positions 475 and 481. An Asymmetric dimethylarginine; alternate modification is found at Arg-493. Residue Arg-493 is modified to Dimethylated arginine; alternate. An Omega-N-methylarginine; alternate modification is found at Arg-493. Position 506 is an omega-N-methylarginine (Arg-506). Position 512 is an N6-acetyllysine (Lys-512). Arg-518 carries the omega-N-methylarginine modification. The region spanning 542–619 is the PABC domain; the sequence is QEPLTASMLA…AVAVLQAHQA (78 aa).

This sequence belongs to the polyadenylate-binding protein type-1 family. May form homodimers. Component of a multisubunit autoregulatory ribonucleoprotein complex (ARC), at least composed of IGF2BP1, PABPC1 and CSDE1. Directly interacts with IGF2BP1. Part of a complex associated with the FOS mCRD domain and consisting of HNRPD, SYNCRIP, PAIP1 and CSDE1/UNR. Interacts with PAIP1 and PAIP2 (via the PABPC1-interacting motifs PAM1 and PAM2). Interacts with PAIP1 with a 1:1 stoichiometry and with PAIP2 with a 1:2 stoichiometry. The interaction with CSDE1 is direct and RNA-independent. Found in a mRNP complex with YBX2. Interacts with TENT2/GLD2. Identified in the spliceosome C complex. Identified in a mRNP complex, at least composed of DHX9, DDX3X, ELAVL1, HNRNPU, IGF2BP1, ILF3, PABPC1, PCBP2, PTBP2, STAU1, STAU2, SYNCRIP and YBX1. The interaction with DDX3X is direct and RNA-independent. This interaction increases in stressed cells and decreases during cell recovery. Identified in a IGF2BP1-dependent mRNP granule complex containing untranslated mRNAs. Interacts with NXF1/TAP. Interacts with PIWIL1. Interacts with AGO1, AGO2, GSPT1 and GSPT2. Interacts with LARP4B. Interacts (via the second and third RRM domains and the C-terminus) with PAIP2B (via central acidic portion and C-terminus). Forms a complex with LARP1 and SHFL. Interacts with LARP4. Interacts with ZFC3H1 in a RNase-sensitive manner. Interacts with TRIM71 (via NHL repeats) in an RNA-dependent manner. Interacts with TENT5C; the interaction has no effect on TENT5C poly(A) polymerase function. Interacts with G3BP1 and G3BP2. Interacts with ENDOV; the interaction is RNA-dependent and stimulates ENDOV activity. Interacts with UPF1; the interaction is RNA-dependent. Interacts with IGF2BP2 and IGF2BP3. May interact with SETX. Interacts with RBM46. Interacts with PAN3 isoform 1/Pan3L and isoform 3/Pan3S (via N-terminus); interaction with isoform 1 is less efficient than with isoform 3. Phosphorylated by MAPKAPK2. In terms of processing, methylated by CARM1. Arg-493 is dimethylated, probably to asymmetric dimethylarginine.

It localises to the cytoplasm. Its subcellular location is the stress granule. The protein resides in the nucleus. The protein localises to the cell projection. It is found in the lamellipodium. Its function is as follows. Binds the poly(A) tail of mRNA, including that of its own transcript, and regulates processes of mRNA metabolism such as pre-mRNA splicing and mRNA stability. Its function in translational initiation regulation can either be enhanced by PAIP1 or repressed by PAIP2. Can probably bind to cytoplasmic RNA sequences other than poly(A) in vivo. Binds to N6-methyladenosine (m6A)-containing mRNAs and contributes to MYC stability by binding to m6A-containing MYC mRNAs. Involved in translationally coupled mRNA turnover. Implicated with other RNA-binding proteins in the cytoplasmic deadenylation/translational and decay interplay of the FOS mRNA mediated by the major coding-region determinant of instability (mCRD) domain. Involved in regulation of nonsense-mediated decay (NMD) of mRNAs containing premature stop codons; for the recognition of premature termination codons (PTC) and initiation of NMD a competitive interaction between UPF1 and PABPC1 with the ribosome-bound release factors is proposed. By binding to long poly(A) tails, may protect them from uridylation by ZCCHC6/ZCCHC11 and hence contribute to mRNA stability. The protein is Polyadenylate-binding protein 1 (Pabpc1) of Rattus norvegicus (Rat).